The following is a 66-amino-acid chain: ATP synthase F(0) complex subunit 8 (66 aa).

Residues 8 to 24 (TWLTMILSMFLTLFIIF) form a helical membrane-spanning segment. Lys-54 carries the N6-acetyllysine; alternate modification. Position 54 is an N6-succinyllysine; alternate (Lys-54). Lys-57 bears the N6-acetyllysine mark.

The protein belongs to the ATPase protein 8 family. Component of the ATP synthase complex composed at least of ATP5F1A/subunit alpha, ATP5F1B/subunit beta, ATP5MC1/subunit c (homooctomer), MT-ATP6/subunit a, MT-ATP8/subunit 8, ATP5ME/subunit e, ATP5MF/subunit f, ATP5MG/subunit g, ATP5MK/subunit k, ATP5MJ/subunit j, ATP5F1C/subunit gamma, ATP5F1D/subunit delta, ATP5F1E/subunit epsilon, ATP5PF/subunit F6, ATP5PB/subunit b, ATP5PD/subunit d, ATP5PO/subunit OSCP. ATP synthase complex consists of a soluble F(1) head domain (subunits alpha(3) and beta(3)) - the catalytic core - and a membrane F(0) domain - the membrane proton channel (subunits c, a, 8, e, f, g, k and j). These two domains are linked by a central stalk (subunits gamma, delta, and epsilon) rotating inside the F1 region and a stationary peripheral stalk (subunits F6, b, d, and OSCP). Interacts with PRICKLE3.

It localises to the mitochondrion membrane. Functionally, subunit 8, of the mitochondrial membrane ATP synthase complex (F(1)F(0) ATP synthase or Complex V) that produces ATP from ADP in the presence of a proton gradient across the membrane which is generated by electron transport complexes of the respiratory chain. ATP synthase complex consist of a soluble F(1) head domain - the catalytic core - and a membrane F(1) domain - the membrane proton channel. These two domains are linked by a central stalk rotating inside the F(1) region and a stationary peripheral stalk. During catalysis, ATP synthesis in the catalytic domain of F(1) is coupled via a rotary mechanism of the central stalk subunits to proton translocation. In vivo, can only synthesize ATP although its ATP hydrolase activity can be activated artificially in vitro. Part of the complex F(0) domain. The sequence is that of ATP synthase F(0) complex subunit 8 from Bos mutus grunniens (Wild yak).